The sequence spans 427 residues: cAMP-dependent protein kinase regulatory subunit (427 aa).

A dimerization and phosphorylation region spans residues 38–184; the sequence is QFCSNFFIRK…RIKVSISNNF (147 aa). A disordered region spans residues 96–145; that stretch reads TTHMGHPNDHGALHDDDDDPLEDEDDEEFDKFSTEPLPSLPPTNYNRGRR. Positions 110–124 are enriched in acidic residues; sequence DDDDDPLEDEDDEEF. A Phosphoserine modification is found at serine 147. Residues 185-300, glutamate 250, arginine 259, 303-422, glutamate 372, and arginine 381 contribute to the 3',5'-cyclic AMP site; these read LFRN…FLSE and LLKS…YHAV.

The protein belongs to the cAMP-dependent kinase regulatory chain family. As to quaternary structure, tetramer, composed of 2 regulatory (R) and 2 catalytic (C) subunits. In the presence of cAMP it dissociates into 2 active monomeric C subunits and an R dimer.

The polypeptide is cAMP-dependent protein kinase regulatory subunit (pkar) (Mucor circinelloides f. lusitanicus (Mucor racemosus var. lusitanicus)).